A 283-amino-acid chain; its full sequence is Undecaprenyl-diphosphatase (283 aa).

6 consecutive transmembrane segments (helical) span residues 47-67 (PGLS…IAYF), 94-114 (LGIA…CIKL), 127-147 (VPAI…AELL), 197-217 (AARF…LVEL), 227-247 (GGVL…WLAI), and 261-281 (IFVV…SGSA).

It belongs to the UppP family.

It localises to the cell inner membrane. It catalyses the reaction di-trans,octa-cis-undecaprenyl diphosphate + H2O = di-trans,octa-cis-undecaprenyl phosphate + phosphate + H(+). Functionally, catalyzes the dephosphorylation of undecaprenyl diphosphate (UPP). Confers resistance to bacitracin. The polypeptide is Undecaprenyl-diphosphatase (Synechococcus sp. (strain CC9311)).